The primary structure comprises 623 residues: Bifunctional methionine biosynthesis protein MetXA/MetW (623 aa).

Residues 1–17 (MTSGRSTRVTMFESQAS) are compositionally biased toward polar residues. Positions 1-30 (MTSGRSTRVTMFESQASMGEPSNEDLSSTD) are disordered. An AB hydrolase-1 domain is found at 77–385 (NAVLVCHAVS…TTNAGHDAFL (309 aa)). Residue S183 is the Nucleophile of the active site. Residue R253 coordinates substrate. Catalysis depends on residues D348 and H381. D382 contributes to the substrate binding site. A metW region spans residues 417 to 619 (NVDEESILEI…NADTAVIAFH (203 aa)).

In the N-terminal section; belongs to the AB hydrolase superfamily. MetX family. This sequence in the C-terminal section; belongs to the MetW family. In terms of assembly, homodimer.

Its subcellular location is the cytoplasm. It carries out the reaction L-homoserine + acetyl-CoA = O-acetyl-L-homoserine + CoA. It functions in the pathway amino-acid biosynthesis; L-methionine biosynthesis via de novo pathway; O-acetyl-L-homoserine from L-homoserine: step 1/1. Functionally, transfers an acetyl group from acetyl-CoA to L-homoserine, forming acetyl-L-homoserine. The polypeptide is Bifunctional methionine biosynthesis protein MetXA/MetW (Rhodopirellula baltica (strain DSM 10527 / NCIMB 13988 / SH1)).